We begin with the raw amino-acid sequence, 228 residues long: 7-cyano-7-deazaguanine synthase (228 aa).

Leu7–Thr17 contributes to the ATP binding site. Zn(2+)-binding residues include Cys187, Cys195, Cys198, and Cys201.

It belongs to the QueC family. The cofactor is Zn(2+).

The enzyme catalyses 7-carboxy-7-deazaguanine + NH4(+) + ATP = 7-cyano-7-deazaguanine + ADP + phosphate + H2O + H(+). It functions in the pathway purine metabolism; 7-cyano-7-deazaguanine biosynthesis. Its function is as follows. Catalyzes the ATP-dependent conversion of 7-carboxy-7-deazaguanine (CDG) to 7-cyano-7-deazaguanine (preQ(0)). In Chlorobium chlorochromatii (strain CaD3), this protein is 7-cyano-7-deazaguanine synthase.